The following is a 92-amino-acid chain: C-C motif chemokine 5 (92 aa).

The signal sequence occupies residues 1–23; it reads MKVSTAAFAVLLTAAAFCTPASA. 2 cysteine pairs are disulfide-bonded: Cys-33–Cys-57 and Cys-34–Cys-73.

It belongs to the intercrine beta (chemokine CC) family.

It localises to the secreted. Functionally, chemoattractant for blood monocytes, memory T-helper cells and eosinophils. Causes the release of histamine from basophils and activates eosinophils. May activate several chemokine receptors including CCR1, CCR3, CCR4 and CCR5. May also be an agonist of the G protein-coupled receptor GPR75. Together with GPR75, may play a role in neuron survival through activation of a downstream signaling pathway involving the PI3, Akt and MAP kinases. By activating GPR75 may also play a role in insulin secretion by islet cells. This chain is C-C motif chemokine 5 (CCL5), found in Felis catus (Cat).